Consider the following 368-residue polypeptide: Zinc finger protein 24 (368 aa).

Residue Lys-22 forms a Glycyl lysine isopeptide (Lys-Gly) (interchain with G-Cter in SUMO2) linkage. Residue Lys-27 forms a Glycyl lysine isopeptide (Lys-Gly) (interchain with G-Cter in SUMO1); alternate linkage. Lys-27 is covalently cross-linked (Glycyl lysine isopeptide (Lys-Gly) (interchain with G-Cter in SUMO2); alternate). Residues 52–134 enclose the SCAN box domain; the sequence is RQRFRQFGYQ…AVLEDLESEL (83 aa). 2 positions are modified to phosphoserine: Ser-132 and Ser-142. Glycyl lysine isopeptide (Lys-Gly) (interchain with G-Cter in SUMO2) cross-links involve residues Lys-147, Lys-177, and Lys-236. The C2H2-type 1 zinc finger occupies 251 to 273; that stretch reads HICDECGKHFSQGSALILHQRIH. The tract at residues 251-301 is necessary and sufficient for nuclear localization; the sequence is HICDECGKHFSQGSALILHQRIHSGEKPYGCVECGKAFSRSSILVQHQRVH. A Phosphoserine modification is found at Ser-274. Residues Lys-277 and Lys-286 each participate in a glycyl lysine isopeptide (Lys-Gly) (interchain with G-Cter in SUMO2) cross-link. 3 consecutive C2H2-type zinc fingers follow at residues 279–301, 307–329, and 335–357; these read YGCVECGKAFSRSSILVQHQRVH, YKCLECGKAFSQNSGLINHQRIH, and YECVQCGKSYSQSSNLFRHQRRH. Residue Ser-292 is modified to Phosphoserine. Tyr-335 is modified (phosphotyrosine). Residues Lys-361 and Lys-367 each participate in a glycyl lysine isopeptide (Lys-Gly) (interchain with G-Cter in SUMO2) cross-link.

This sequence belongs to the krueppel C2H2-type zinc-finger protein family. Sumoylated. As to expression, widely expressed with highest levels in heart, brain, liver, skeletal muscle, kidney and testis and very low levels in spleen and lung.

It is found in the nucleus. In terms of biological role, transcription factor required for myelination of differentiated oligodendrocytes. Required for the conversion of oligodendrocytes from the premyelinating to the myelinating state. In the developing central nervous system (CNS), involved in the maintenance in the progenitor stage by promoting the cell cycle. Specifically binds to the 5'-TCAT-3' DNA sequence. Has transcription repressor activity in vitro. The protein is Zinc finger protein 24 of Mus musculus (Mouse).